The chain runs to 228 residues: Prepilin leader peptidase/N-methyltransferase (228 aa).

Transmembrane regions (helical) follow at residues 18 to 38, 95 to 115, 116 to 136, 147 to 167, 168 to 188, and 204 to 224; these read LWGSFLFLSGLAFGSFFNVVI, RYPLMELATGALFVLAGYLMA, PGVPLLGGLILLSLLLILAAI, LTLPLMWAGLLFNLSATYVPL, AEAVVGAMAGYLSLWSVYWVF, and LLAALGAWLGWQALPQTLLLA.

It belongs to the peptidase A24 family.

The protein resides in the cell inner membrane. It catalyses the reaction Typically cleaves a -Gly-|-Phe- bond to release an N-terminal, basic peptide of 5-8 residues from type IV prepilin, and then N-methylates the new N-terminal amino group, the methyl donor being S-adenosyl-L-methionine.. Its function is as follows. Plays an essential role in type IV pili and type II pseudopili formation by proteolytically removing the leader sequence from substrate proteins and subsequently monomethylating the alpha-amino group of the newly exposed N-terminal phenylalanine. The protein is Prepilin leader peptidase/N-methyltransferase (pulO) of Klebsiella pneumoniae.